We begin with the raw amino-acid sequence, 287 residues long: MDMHSARLDSFLSQLRWELLCGRDTGSPSMPGPLQPTSQTGPDVQPSHQLRASGALEEDSVCCVEEEEEEEEEAVVTEDRDAALGGPREHALDWDSGFSEVSGSTWREEELPVSQRPAPSAQPLRRQCLSVSGLPMPSRAPVASVPPVHHPRPKSTPDACLEHWQGLEAEDWTAALLNRGRSRQPLVLGDNCFADLVHNWMELPETGSEGGDGGGHRARARPPQFLLGLSEQLRRRLARARRTAMAGKRLSCPPRPEPELPADVSRFAALMSCRSRQPIICNDVSYL.

Disordered stretches follow at residues 22-59 (GRDT…LEED) and 138-157 (SRAP…KSTP). The segment covering 35 to 50 (QPTSQTGPDVQPSHQL) has biased composition (polar residues). Residues 138-147 (SRAPVASVPP) are compositionally biased toward low complexity. Inka box regions lie at residues 168–205 (EAED…ELPE) and 261–287 (PADV…VSYL).

It belongs to the INKA family. As to quaternary structure, interacts with PAK4.

Its subcellular location is the nucleus. The protein localises to the cytoplasm. In terms of biological role, inhibitor of the serine/threonine-protein kinase PAK4. Acts by binding PAK4 in a substrate-like manner, inhibiting the protein kinase activity. This chain is PAK4-inhibitor INKA1, found in Homo sapiens (Human).